The following is a 41-amino-acid chain: MKVVKSLKSAKSRHPDCQIVKRRGRLYVICKTNPRFKAVQK.

Belongs to the bacterial ribosomal protein bL36 family.

The sequence is that of Large ribosomal subunit protein bL36B from Vibrio campbellii (strain ATCC BAA-1116).